The sequence spans 245 residues: Probable GTP-binding protein EngB (245 aa).

In terms of domain architecture, EngB-type G spans 46–223 (DVPEIAFVGR…AQHLWDWAHP (178 aa)). GTP contacts are provided by residues 54–61 (GRSNAGKS), 81–85 (GRTQS), 103–106 (DLPG), 173–176 (TKSD), and 202–204 (FSS). The Mg(2+) site is built by Ser-61 and Thr-83. Residues 219–245 (DWAHPPEKPAKKPKAEPAAEAATGDEG) form a disordered region. The span at 222–235 (HPPEKPAKKPKAEP) shows a compositional bias: basic and acidic residues. Positions 236 to 245 (AAEAATGDEG) are enriched in low complexity.

The protein belongs to the TRAFAC class TrmE-Era-EngA-EngB-Septin-like GTPase superfamily. EngB GTPase family. Requires Mg(2+) as cofactor.

Necessary for normal cell division and for the maintenance of normal septation. The protein is Probable GTP-binding protein EngB of Polaromonas sp. (strain JS666 / ATCC BAA-500).